Consider the following 275-residue polypeptide: Holocytochrome c-type synthase (275 aa).

2 disordered regions span residues 1–59 (MGLS…KTNS) and 83–102 (KENL…PAPD). Gly2 carries N-myristoyl glycine lipidation. Over residues 9–28 (AASTVQTSTPAASDHQTAAP) the composition is skewed to polar residues. HRM repeat units follow at residues 31–36 (GCPMHE) and 41–46 (GCPVSA). Residues 48–59 (PSDSTCGSKTNS) are compositionally biased toward polar residues. Residues 91–102 (LMPPPNQTPAPD) show a composition bias toward pro residues.

It belongs to the cytochrome c-type heme lyase family.

The protein resides in the mitochondrion inner membrane. It is found in the membrane. The catalysed reaction is holo-[cytochrome c] = apo-[cytochrome c] + heme b. Its function is as follows. Lyase that catalyzes the covalent linking of the heme group to the cytochrome C apoprotein to produce the mature functional cytochrome. The polypeptide is Holocytochrome c-type synthase (Bos taurus (Bovine)).